A 196-amino-acid chain; its full sequence is 3-isopropylmalate dehydratase small subunit (196 aa).

Belongs to the LeuD family. LeuD type 1 subfamily. In terms of assembly, heterodimer of LeuC and LeuD.

It catalyses the reaction (2R,3S)-3-isopropylmalate = (2S)-2-isopropylmalate. The protein operates within amino-acid biosynthesis; L-leucine biosynthesis; L-leucine from 3-methyl-2-oxobutanoate: step 2/4. Its function is as follows. Catalyzes the isomerization between 2-isopropylmalate and 3-isopropylmalate, via the formation of 2-isopropylmaleate. The chain is 3-isopropylmalate dehydratase small subunit from Corynebacterium aurimucosum (strain ATCC 700975 / DSM 44827 / CIP 107346 / CN-1) (Corynebacterium nigricans).